Consider the following 144-residue polypeptide: Large ribosomal subunit protein uL15 (144 aa).

Positions 1 to 53 (MRLNTLSPAVGAKSAPKRVGRGIGSGLGKTAGRGHKGQKSRSGGGVRPGFEGG) are disordered. Gly residues-rich tracts occupy residues 21–31 (RGIGSGLGKTA) and 42–52 (SGGGVRPGFEG).

It belongs to the universal ribosomal protein uL15 family. As to quaternary structure, part of the 50S ribosomal subunit.

Binds to the 23S rRNA. The polypeptide is Large ribosomal subunit protein uL15 (Shewanella amazonensis (strain ATCC BAA-1098 / SB2B)).